Reading from the N-terminus, the 346-residue chain is Phosphoribosylformylglycinamidine cyclo-ligase (346 aa).

The protein belongs to the AIR synthase family.

It is found in the cytoplasm. The catalysed reaction is 2-formamido-N(1)-(5-O-phospho-beta-D-ribosyl)acetamidine + ATP = 5-amino-1-(5-phospho-beta-D-ribosyl)imidazole + ADP + phosphate + H(+). The protein operates within purine metabolism; IMP biosynthesis via de novo pathway; 5-amino-1-(5-phospho-D-ribosyl)imidazole from N(2)-formyl-N(1)-(5-phospho-D-ribosyl)glycinamide: step 2/2. In Alteromonas mediterranea (strain DSM 17117 / CIP 110805 / LMG 28347 / Deep ecotype), this protein is Phosphoribosylformylglycinamidine cyclo-ligase.